Here is a 146-residue protein sequence, read N- to C-terminus: Large ribosomal subunit protein uL11 (146 aa).

The protein belongs to the universal ribosomal protein uL11 family. As to quaternary structure, part of the ribosomal stalk of the 50S ribosomal subunit. Interacts with L10 and the large rRNA to form the base of the stalk. L10 forms an elongated spine to which L12 dimers bind in a sequential fashion forming a multimeric L10(L12)X complex. Post-translationally, one or more lysine residues are methylated.

Forms part of the ribosomal stalk which helps the ribosome interact with GTP-bound translation factors. In Salinibacter ruber (strain DSM 13855 / M31), this protein is Large ribosomal subunit protein uL11.